Reading from the N-terminus, the 365-residue chain is S-type anion channel SLAH4 (365 aa).

Over methionine 1–asparagine 25 the chain is Cytoplasmic. Residues leucine 26–phenylalanine 46 traverse the membrane as a helical segment. Residues arginine 47 to alanine 73 lie on the Extracellular side of the membrane. The chain crosses the membrane as a helical span at residues tyrosine 74–phenylalanine 94. The Cytoplasmic segment spans residues lysine 95–glutamate 106. The helical transmembrane segment at phenylalanine 107–leucine 127 threads the bilayer. Residues glutamine 128 to proline 131 lie on the Extracellular side of the membrane. Residues methionine 132–leucine 152 form a helical membrane-spanning segment. Over threonine 153 to arginine 168 the chain is Cytoplasmic. Residues phenylalanine 169–alanine 189 traverse the membrane as a helical segment. The Extracellular segment spans residues arginine 190–glutamate 199. A helical transmembrane segment spans residues cysteine 200 to tyrosine 220. Residues glutamine 221–proline 235 lie on the Cytoplasmic side of the membrane. Residues valine 236 to glycine 256 form a helical membrane-spanning segment. Position 257 (asparagine 257) is a topological domain, extracellular. The helical transmembrane segment at phenylalanine 258–cysteine 278 threads the bilayer. Residues arginine 279–asparagine 291 are Cytoplasmic-facing. Residues valine 292–alanine 312 form a helical membrane-spanning segment. At glutamine 313 to serine 321 the chain is on the extracellular side. The chain crosses the membrane as a helical span at residues valine 322 to threonine 342. Residues alanine 343–lysine 365 are Cytoplasmic-facing.

The protein belongs to the SLAC1 S-type anion channel family. Homotrimer.

The protein localises to the cell membrane. Functionally, slow, weak voltage-dependent S-type anion efflux channel involved in maintenance of anion homeostasis. The protein is S-type anion channel SLAH4 (SLAH4) of Arabidopsis thaliana (Mouse-ear cress).